The sequence spans 883 residues: Phosphoenolpyruvate carboxylase (883 aa).

Active-site residues include His138 and Lys546.

It belongs to the PEPCase type 1 family. It depends on Mg(2+) as a cofactor.

It carries out the reaction oxaloacetate + phosphate = phosphoenolpyruvate + hydrogencarbonate. Functionally, forms oxaloacetate, a four-carbon dicarboxylic acid source for the tricarboxylic acid cycle. The sequence is that of Phosphoenolpyruvate carboxylase from Enterobacter sp. (strain 638).